The chain runs to 181 residues: Ankyrin repeat-containing protein YGL242C (181 aa).

Met-1 bears the N-acetylmethionine mark. ANK repeat units follow at residues 49-78 and 85-120; these read LGNTALHLCCKYGSWEVLDKILDQDGEIEI and DGDTPLHVTVRYSQEEPEHGTFIARNLIEVGADPRV. The tract at residues 151–181 is disordered; it reads IDSTNGSGDNNEDGEMIDDGPSDDDEEDDKK. Positions 160-181 are enriched in acidic residues; it reads NNEDGEMIDDGPSDDDEEDDKK. Ser-172 is modified (phosphoserine).

This chain is Ankyrin repeat-containing protein YGL242C, found in Saccharomyces cerevisiae (strain ATCC 204508 / S288c) (Baker's yeast).